The following is a 1357-amino-acid chain: DNA-directed RNA polymerase subunit beta (1357 aa).

The protein belongs to the RNA polymerase beta chain family. As to quaternary structure, the RNAP catalytic core consists of 2 alpha, 1 beta, 1 beta' and 1 omega subunit. When a sigma factor is associated with the core the holoenzyme is formed, which can initiate transcription.

The enzyme catalyses RNA(n) + a ribonucleoside 5'-triphosphate = RNA(n+1) + diphosphate. Functionally, DNA-dependent RNA polymerase catalyzes the transcription of DNA into RNA using the four ribonucleoside triphosphates as substrates. The sequence is that of DNA-directed RNA polymerase subunit beta from Acinetobacter baumannii (strain ATCC 17978 / DSM 105126 / CIP 53.77 / LMG 1025 / NCDC KC755 / 5377).